Reading from the N-terminus, the 113-residue chain is MISSVQNVSNLSMTRALGAVDTENSASSAATTMPGTAGAANGLSFASVLGGMASDAVNSLKGAESMSFAGIKGTATTREVVDSMLQAEQTLQTAIAIRDKVVSAFLEVTKMQM.

It belongs to the FliE family.

The protein resides in the bacterial flagellum basal body. The polypeptide is Flagellar hook-basal body complex protein FliE (Rhizobium etli (strain ATCC 51251 / DSM 11541 / JCM 21823 / NBRC 15573 / CFN 42)).